Here is a 170-residue protein sequence, read N- to C-terminus: ATP synthase subunit b (170 aa).

A helical membrane pass occupies residues I22–G41. The interval L76–R98 is disordered. A compositionally biased stretch (basic and acidic residues) spans D89–R98.

The protein belongs to the ATPase B chain family. F-type ATPases have 2 components, F(1) - the catalytic core - and F(0) - the membrane proton channel. F(1) has five subunits: alpha(3), beta(3), gamma(1), delta(1), epsilon(1). F(0) has four main subunits: a(1), b(1), b'(1) and c(10-14). The alpha and beta chains form an alternating ring which encloses part of the gamma chain. F(1) is attached to F(0) by a central stalk formed by the gamma and epsilon chains, while a peripheral stalk is formed by the delta, b and b' chains.

It is found in the cellular thylakoid membrane. Functionally, f(1)F(0) ATP synthase produces ATP from ADP in the presence of a proton or sodium gradient. F-type ATPases consist of two structural domains, F(1) containing the extramembraneous catalytic core and F(0) containing the membrane proton channel, linked together by a central stalk and a peripheral stalk. During catalysis, ATP synthesis in the catalytic domain of F(1) is coupled via a rotary mechanism of the central stalk subunits to proton translocation. In terms of biological role, component of the F(0) channel, it forms part of the peripheral stalk, linking F(1) to F(0). This Prochlorococcus marinus (strain AS9601) protein is ATP synthase subunit b.